A 236-amino-acid polypeptide reads, in one-letter code: Probable calcium-binding protein CML30 (236 aa).

Residues 43-64 (VVVVAKKRPEEEPRRPDPDADL) are disordered. A compositionally biased stretch (basic and acidic residues) spans 49–60 (KRPEEEPRRPDP). EF-hand domains follow at residues 59–94 (DPDA…LGIA) and 96–131 (SSAA…IPKR). Residues D72, D74, D76, E83, D109, N111, D113, and E120 each coordinate Ca(2+). A disordered region spans residues 130–158 (KRRKSHQQHPLPSTAAADEEAAAADEEYE). Residues 146–158 (ADEEAAAADEEYE) show a composition bias toward acidic residues. 2 consecutive EF-hand domains span residues 161–196 (EEER…LGLR) and 202–236 (PAVA…VVKA). The Ca(2+) site is built by D174, N176, D178, E185, D215, D217, D219, M221, and E226.

Potential calcium sensor. The chain is Probable calcium-binding protein CML30 (CML30) from Oryza sativa subsp. japonica (Rice).